A 466-amino-acid chain; its full sequence is cAMP-dependent protein kinase regulatory subunit (466 aa).

The interval 25 to 231 is dimerization and phosphorylation; it reads QFAANYFTKR…RLEKAVGKNF (207 aa). A compositionally biased stretch (low complexity) spans 71 to 80; sequence ASLSHGSSKA. 4 disordered regions span residues 71–90, 109–139, 154–179, and 193–218; these read ASLSHGSSKANASQSGISSS, STHIVDHLDSTHSNTTASPAKASGGDAPGIF, NSSVDPMAPEPTATTHSFPRRSVVNP, and SVSGETLQPDHLDDWKPENFQEKSPE. Over residues 81 to 90 the composition is skewed to polar residues; sequence NASQSGISSS. Basic and acidic residues predominate over residues 109–118; the sequence is STHIVDHLDS. Serine 193 carries the post-translational modification Phosphoserine. The segment covering 200–218 has biased composition (basic and acidic residues); sequence QPDHLDDWKPENFQEKSPE. 3',5'-cyclic AMP is bound by residues 232–347, glutamate 297, arginine 306, 350–466, glutamate 416, and arginine 425; these read LFNK…LLKN and ILKS…RSKH.

Belongs to the cAMP-dependent kinase regulatory chain family. Tetramer, composed of 2 regulatory (R) and 2 catalytic (C) subunits. In the presence of cAMP it dissociates into 2 active monomeric C subunits and an R dimer.

In Kluyveromyces lactis (strain ATCC 8585 / CBS 2359 / DSM 70799 / NBRC 1267 / NRRL Y-1140 / WM37) (Yeast), this protein is cAMP-dependent protein kinase regulatory subunit (PKAR).